Here is a 410-residue protein sequence, read N- to C-terminus: Acetate kinase (410 aa).

A Mg(2+)-binding site is contributed by N7. K14 lines the ATP pocket. Position 88 (R88) interacts with substrate. D145 (proton donor/acceptor) is an active-site residue. ATP-binding positions include 203–207 (HAGNG), 278–280 (DTR), and 326–330 (GIGEN). E379 serves as a coordination point for Mg(2+).

The protein belongs to the acetokinase family. As to quaternary structure, homodimer. The cofactor is Mg(2+). Mn(2+) serves as cofactor.

The protein resides in the cytoplasm. The catalysed reaction is acetate + ATP = acetyl phosphate + ADP. It functions in the pathway metabolic intermediate biosynthesis; acetyl-CoA biosynthesis; acetyl-CoA from acetate: step 1/2. Functionally, catalyzes the formation of acetyl phosphate from acetate and ATP. Can also catalyze the reverse reaction. The chain is Acetate kinase from Chlorante-Aster yellows phytoplasma.